Reading from the N-terminus, the 210-residue chain is MAKQKVPAAPSVRRLPSYLHLVKKAEADKLEYISGTVIAEELELEPIQVRKDLTITGIVGKPKKGYPVKLLITAIEKFLGWNKEKKAFVIGAGSLGTALSGYQGFKEHGLDICAAFDSDKRKIGKEIHELPVFGMDELETKVKEYKPEIAILTVPSKYAQEAANAIVKAGIKAIWNFTNIKITVPDKVIVQKEDLSSGYAMLGVMMNTKK.

Positions 17–56 (SYLHLVKKAEADKLEYISGTVIAEELELEPIQVRKDLTIT) form a DNA-binding region, H-T-H motif. Residue 91 to 96 (GAGSLG) coordinates NAD(+).

This sequence belongs to the transcriptional regulatory Rex family. As to quaternary structure, homodimer.

It localises to the cytoplasm. Its function is as follows. Modulates transcription in response to changes in cellular NADH/NAD(+) redox state. This Treponema denticola (strain ATCC 35405 / DSM 14222 / CIP 103919 / JCM 8153 / KCTC 15104) protein is Redox-sensing transcriptional repressor Rex.